The sequence spans 134 residues: UPF0412 protein YaaI (134 aa).

The signal sequence occupies residues 1–23 (MRSVLTISVGLLFGLALSSVAHA).

It belongs to the UPF0412 family.

The chain is UPF0412 protein YaaI from Salmonella paratyphi A (strain ATCC 9150 / SARB42).